Reading from the N-terminus, the 571-residue chain is MFSMSRKQHASMYGPTTGDRLRLADTGLFAEIEEDLTIAGEEAVFGGGKVVRVGMGQNGHRTREEDPDIPDTVITNVIVLDWSGIYKADIGIRDGIITGIGHAGNPDTMDGGTIPIGVSTDIIAGEGKVLTAGGIDTHIHFISPEQIEAALVSGITTMIGGGTGPSESTKATTITPGPWHIHQMLRSLDGFPMNIGLLGKGHATASAPLIDQIRAGAIGLKVHEDWGATPATIDLSLSVADEFDIQVAVHTDTLNEAGFVESTREAIGGRVIHTFHTEGAGGGHAPDIIALAGEPNVLPASTNPTLPYTVNTVEEHLDMLMVCHHLNPDVPEDVAFADSRIRTETIAAEDVLHDMGIFSITSSDSQAMGRVGEVIIRTWQVADSMKRQRGPLEGDTADSDNNRIKRYVAKYTINPALAQGISHVVGSVETGKFADLVLWEPKFFGVKPFMILKGGQVVNSIMGDAGASIPTPQPELYRPMFGSYGSATSSNSITFLPRVAIAAGIPEQLGLNRRIEECHGIRTLTKQSLKLNGETPSIHVDPETYEVRIDGALITCEPAEKLPLAQRYFLF.

One can recognise a Urease domain in the interval 133–571 (GGIDTHIHFI…LPLAQRYFLF (439 aa)). The Ni(2+) site is built by histidine 138, histidine 140, and lysine 221. N6-carboxylysine is present on lysine 221. Substrate is bound at residue histidine 223. 2 residues coordinate Ni(2+): histidine 250 and histidine 276. Histidine 324 functions as the Proton donor in the catalytic mechanism. Aspartate 364 contributes to the Ni(2+) binding site.

This sequence belongs to the metallo-dependent hydrolases superfamily. Urease alpha subunit family. In terms of assembly, heterotrimer of UreA (gamma), UreB (beta) and UreC (alpha) subunits. Three heterotrimers associate to form the active enzyme. It depends on Ni cation as a cofactor. In terms of processing, carboxylation allows a single lysine to coordinate two nickel ions.

The protein resides in the cytoplasm. The enzyme catalyses urea + 2 H2O + H(+) = hydrogencarbonate + 2 NH4(+). It participates in nitrogen metabolism; urea degradation; CO(2) and NH(3) from urea (urease route): step 1/1. The sequence is that of Urease subunit alpha from Corynebacterium efficiens (strain DSM 44549 / YS-314 / AJ 12310 / JCM 11189 / NBRC 100395).